The chain runs to 284 residues: Acetyl-coenzyme A carboxylase carboxyl transferase subunit beta (284 aa).

Residues 27–284 enclose the CoA carboxyltransferase N-terminal domain; the sequence is LMTKCPSCKY…ELHDGGVRHV (258 aa). The Zn(2+) site is built by cysteine 31, cysteine 34, cysteine 50, and cysteine 52. The C4-type zinc finger occupies 31-52; it reads CPSCKYMHYTKQLNENHKVCDC.

The protein belongs to the AccD/PCCB family. Acetyl-CoA carboxylase is a heterohexamer composed of biotin carboxyl carrier protein (AccB), biotin carboxylase (AccC) and two subunits each of ACCase subunit alpha (AccA) and ACCase subunit beta (AccD). Zn(2+) serves as cofactor.

The protein localises to the cytoplasm. The enzyme catalyses N(6)-carboxybiotinyl-L-lysyl-[protein] + acetyl-CoA = N(6)-biotinyl-L-lysyl-[protein] + malonyl-CoA. Its pathway is lipid metabolism; malonyl-CoA biosynthesis; malonyl-CoA from acetyl-CoA: step 1/1. In terms of biological role, component of the acetyl coenzyme A carboxylase (ACC) complex. Biotin carboxylase (BC) catalyzes the carboxylation of biotin on its carrier protein (BCCP) and then the CO(2) group is transferred by the transcarboxylase to acetyl-CoA to form malonyl-CoA. The sequence is that of Acetyl-coenzyme A carboxylase carboxyl transferase subunit beta from Exiguobacterium sp. (strain ATCC BAA-1283 / AT1b).